A 293-amino-acid chain; its full sequence is Ribulose bisphosphate carboxylase/oxygenase activase, chloroplastic (293 aa).

75–82 (PGTGKTTV) provides a ligand contact to ATP.

This sequence belongs to the CbxX/CfxQ family. In terms of assembly, forms homooligomers. Forms heterohexameric rings with the nuclear-encoded Rca subunit consisting of 3 of each nuclear- and plastidial-encoded subunits that alternate in the ring.

Its subcellular location is the plastid. It localises to the chloroplast. Required for the expression of ribulose 1,5-bisphosphate carboxylase/oxygenase (RuBisCo). ATPase involved in the activation of red-type RuBisCo, which tends to form inactive complexes with its substrate ribulose 1,5-bisphosphate (RuBP). Catalyzes the release of RuBP from inhibited RuBisCo in an ATP-dependent manner. Activation of RuBisCO involves the ATP-dependent carboxylation of the epsilon-amino group of lysine leading to a carbamate structure. The nuclear-encoded subunit plays a more critical role in activase function than the plastidial-encoded subunit. In Cyanidioschyzon merolae (strain NIES-3377 / 10D) (Unicellular red alga), this protein is Ribulose bisphosphate carboxylase/oxygenase activase, chloroplastic.